Consider the following 158-residue polypeptide: Phosphopantetheine adenylyltransferase (158 aa).

Substrate is bound at residue Thr-10. Residues 10 to 11 and His-18 each bind ATP; that span reads TF. Residues Lys-42, Leu-74, and Arg-88 each contribute to the substrate site. Residues 89–91, Glu-99, and 124–130 each bind ATP; these read GLR and NSFISST.

It belongs to the bacterial CoaD family. Homohexamer. Mg(2+) is required as a cofactor.

The protein resides in the cytoplasm. It catalyses the reaction (R)-4'-phosphopantetheine + ATP + H(+) = 3'-dephospho-CoA + diphosphate. Its pathway is cofactor biosynthesis; coenzyme A biosynthesis; CoA from (R)-pantothenate: step 4/5. Functionally, reversibly transfers an adenylyl group from ATP to 4'-phosphopantetheine, yielding dephospho-CoA (dPCoA) and pyrophosphate. The chain is Phosphopantetheine adenylyltransferase from Shewanella sediminis (strain HAW-EB3).